Here is a 96-residue protein sequence, read N- to C-terminus: Sec-independent protein translocase protein TatA (96 aa).

A helical transmembrane segment spans residues Met1 to Gly21. Residues Gly42–Gly96 are disordered. A compositionally biased stretch (basic and acidic residues) spans Ala56–Lys65. A compositionally biased stretch (pro residues) spans Pro73–Pro86.

This sequence belongs to the TatA/E family. In terms of assembly, the Tat system comprises two distinct complexes: a TatABC complex, containing multiple copies of TatA, TatB and TatC subunits, and a separate TatA complex, containing only TatA subunits. Substrates initially bind to the TatABC complex, which probably triggers association of the separate TatA complex to form the active translocon.

The protein resides in the cell inner membrane. Functionally, part of the twin-arginine translocation (Tat) system that transports large folded proteins containing a characteristic twin-arginine motif in their signal peptide across membranes. TatA could form the protein-conducting channel of the Tat system. In Rhodospirillum rubrum (strain ATCC 11170 / ATH 1.1.1 / DSM 467 / LMG 4362 / NCIMB 8255 / S1), this protein is Sec-independent protein translocase protein TatA.